We begin with the raw amino-acid sequence, 270 residues long: 3-phenylpropionate-dihydrodiol/cinnamic acid-dihydrodiol dehydrogenase (270 aa).

NAD(+) is bound at residue 10-34; the sequence is FITGGGSGLGLALVERFIEKGAQVA. Serine 143 contributes to the substrate binding site. The active-site Proton acceptor is tyrosine 156.

This sequence belongs to the short-chain dehydrogenases/reductases (SDR) family.

It catalyses the reaction 3-(cis-5,6-dihydroxycyclohexa-1,3-dien-1-yl)propanoate + NAD(+) = 3-(2,3-dihydroxyphenyl)propanoate + NADH + H(+). It carries out the reaction (2E)-3-(cis-5,6-dihydroxycyclohexa-1,3-dien-1-yl)prop-2-enoate + NAD(+) = (2E)-3-(2,3-dihydroxyphenyl)prop-2-enoate + NADH + H(+). It functions in the pathway aromatic compound metabolism; 3-phenylpropanoate degradation. Its function is as follows. Converts 3-phenylpropionate-dihydrodiol (PP-dihydrodiol) and cinnamic acid-dihydrodiol (CI-dihydrodiol) into 3-(2,3-dihydroxylphenyl)propanoic acid (DHPP) and 2,3-dihydroxicinnamic acid (DHCI), respectively. This chain is 3-phenylpropionate-dihydrodiol/cinnamic acid-dihydrodiol dehydrogenase (hcaB), found in Escherichia coli.